A 414-amino-acid polypeptide reads, in one-letter code: Tyrosine--tRNA ligase (414 aa).

Residue Y38 coordinates L-tyrosine. Positions 43-52 match the 'HIGH' region motif; the sequence is PTATSLHLGN. Y165 and Q169 together coordinate L-tyrosine. The 'KMSKS' region signature appears at 228–232; sequence KFGKS. An ATP-binding site is contributed by K231. One can recognise an S4 RNA-binding domain in the interval 349-414; that stretch reads FNANQIIDLG…KKYFFIIELI (66 aa).

Belongs to the class-I aminoacyl-tRNA synthetase family. TyrS type 1 subfamily. In terms of assembly, homodimer.

It is found in the cytoplasm. The enzyme catalyses tRNA(Tyr) + L-tyrosine + ATP = L-tyrosyl-tRNA(Tyr) + AMP + diphosphate + H(+). Functionally, catalyzes the attachment of tyrosine to tRNA(Tyr) in a two-step reaction: tyrosine is first activated by ATP to form Tyr-AMP and then transferred to the acceptor end of tRNA(Tyr). In Mesomycoplasma hyopneumoniae (strain 232) (Mycoplasma hyopneumoniae), this protein is Tyrosine--tRNA ligase.